A 92-amino-acid chain; its full sequence is Putative pterin-4-alpha-carbinolamine dehydratase (92 aa).

It belongs to the pterin-4-alpha-carbinolamine dehydratase family.

It catalyses the reaction (4aS,6R)-4a-hydroxy-L-erythro-5,6,7,8-tetrahydrobiopterin = (6R)-L-erythro-6,7-dihydrobiopterin + H2O. This chain is Putative pterin-4-alpha-carbinolamine dehydratase, found in Natronomonas pharaonis (strain ATCC 35678 / DSM 2160 / CIP 103997 / JCM 8858 / NBRC 14720 / NCIMB 2260 / Gabara) (Halobacterium pharaonis).